A 401-amino-acid polypeptide reads, in one-letter code: Glycerol-1-phosphate dehydrogenase [NAD(P)+] (401 aa).

Residues aspartate 57, 118-122 (GTIHD), and 140-143 (TAPS) contribute to the NAD(+) site. Aspartate 145 serves as a coordination point for substrate. An NAD(+)-binding site is contributed by serine 149. Residue aspartate 192 participates in substrate binding. The Ni(2+) site is built by aspartate 192 and histidine 272. Histidine 276 is a substrate binding site. Ni(2+) is bound at residue histidine 292.

It belongs to the glycerol-1-phosphate dehydrogenase family. Homodimer. It depends on Ni(2+) as a cofactor.

The protein resides in the cytoplasm. It catalyses the reaction sn-glycerol 1-phosphate + NAD(+) = dihydroxyacetone phosphate + NADH + H(+). The catalysed reaction is sn-glycerol 1-phosphate + NADP(+) = dihydroxyacetone phosphate + NADPH + H(+). In terms of biological role, catalyzes the NAD(P)H-dependent reduction of dihydroxyacetonephosphate (DHAP or glycerone phosphate) to glycerol 1-phosphate (G1P). The G1P thus generated is probably used for the synthesis of phosphoglycerolipids in Gram-positive bacterial species. This chain is Glycerol-1-phosphate dehydrogenase [NAD(P)+], found in Bacillus licheniformis (strain ATCC 14580 / DSM 13 / JCM 2505 / CCUG 7422 / NBRC 12200 / NCIMB 9375 / NCTC 10341 / NRRL NRS-1264 / Gibson 46).